The following is a 126-amino-acid chain: Histone H2B 1/2/3/4/6 (126 aa).

A compositionally biased stretch (low complexity) spans 1–12 (MPEPAKSAPAPK). A disordered region spans residues 1–36 (MPEPAKSAPAPKKGSKKAVTKTQKKGDKKRKKSRKE). 2 positions are modified to N6-acetyllysine: lysine 6 and lysine 13. Over residues 13–34 (KGSKKAVTKTQKKGDKKRKKSR) the composition is skewed to basic residues. A Phosphoserine modification is found at serine 15. N6-acetyllysine occurs at positions 16 and 21. Lysine 121 participates in a covalent cross-link: Glycyl lysine isopeptide (Lys-Gly) (interchain with G-Cter in ubiquitin).

It belongs to the histone H2B family. As to quaternary structure, the nucleosome is a histone octamer containing two molecules each of H2A, H2B, H3 and H4 assembled in one H3-H4 heterotetramer and two H2A-H2B heterodimers. The octamer wraps approximately 147 bp of DNA. Post-translationally, monoubiquitination of Lys-121 by the BRE1 gives a specific tag for epigenetic transcriptional activation and is also prerequisite for histone H3 'Lys-4' and 'Lys-79' methylation. Phosphorylated on Ser-15 during apoptosis; which facilitates apoptotic chromatin condensation.

The protein localises to the nucleus. It is found in the chromosome. Its function is as follows. Core component of nucleosome. Nucleosomes wrap and compact DNA into chromatin, limiting DNA accessibility to the cellular machineries which require DNA as a template. Histones thereby play a central role in transcription regulation, DNA repair, DNA replication and chromosomal stability. DNA accessibility is regulated via a complex set of post-translational modifications of histones, also called histone code, and nucleosome remodeling. Functionally, has broad-spectrum antibacterial activity. May be important in the antimicrobial defenses of chick reproductive system during follicle development in the ovary and egg formation in the oviduct. In Gallus gallus (Chicken), this protein is Histone H2B 1/2/3/4/6 (H2B-I).